The chain runs to 165 residues: Deoxyuridine 5'-triphosphate nucleotidohydrolase (165 aa).

Residues Arg-66–Gly-68, Asn-79, Thr-83–Asp-85, and Lys-93 each bind substrate. The disordered stretch occupies residues Glu-134–Gly-165.

This sequence belongs to the dUTPase family. Mg(2+) is required as a cofactor.

It carries out the reaction dUTP + H2O = dUMP + diphosphate + H(+). The protein operates within pyrimidine metabolism; dUMP biosynthesis; dUMP from dCTP (dUTP route): step 2/2. In terms of biological role, this enzyme is involved in nucleotide metabolism: it produces dUMP, the immediate precursor of thymidine nucleotides and it decreases the intracellular concentration of dUTP so that uracil cannot be incorporated into DNA. The sequence is that of Deoxyuridine 5'-triphosphate nucleotidohydrolase from Nocardia farcinica (strain IFM 10152).